The chain runs to 280 residues: 4-diphosphocytidyl-2-C-methyl-D-erythritol kinase (280 aa).

The active site involves lysine 8. An ATP-binding site is contributed by 91–101 (PVSAGLAGGST). The active site involves aspartate 133.

Belongs to the GHMP kinase family. IspE subfamily.

The catalysed reaction is 4-CDP-2-C-methyl-D-erythritol + ATP = 4-CDP-2-C-methyl-D-erythritol 2-phosphate + ADP + H(+). It functions in the pathway isoprenoid biosynthesis; isopentenyl diphosphate biosynthesis via DXP pathway; isopentenyl diphosphate from 1-deoxy-D-xylulose 5-phosphate: step 3/6. Functionally, catalyzes the phosphorylation of the position 2 hydroxy group of 4-diphosphocytidyl-2C-methyl-D-erythritol. The chain is 4-diphosphocytidyl-2-C-methyl-D-erythritol kinase from Clostridium beijerinckii (strain ATCC 51743 / NCIMB 8052) (Clostridium acetobutylicum).